The sequence spans 261 residues: 14-3-3 protein 9 (261 aa).

Positions 239–261 (PEDAEDAQKGDATNKAGGGEDAE) are disordered.

This sequence belongs to the 14-3-3 family. As to quaternary structure, homodimer.

The sequence is that of 14-3-3 protein 9 (TFT9) from Solanum lycopersicum (Tomato).